The following is a 64-amino-acid chain: U9-ctenitoxin-Pr1a (64 aa).

Cystine bridges form between C3–C15, C9–C24, C14–C47, C34–C55, and C49–C61.

Expressed by the venom gland.

Its subcellular location is the secreted. Its function is as follows. Non-toxic to mice and insects. The polypeptide is U9-ctenitoxin-Pr1a (Phoneutria reidyi (Brazilian Amazonian armed spider)).